A 573-amino-acid polypeptide reads, in one-letter code: MLO-like protein 11 (573 aa).

Residues 1-19 are Extracellular-facing; sequence MGEGEENGNEADSNERSLA. A helical transmembrane segment spans residues 20 to 40; it reads LSPTWSVAIVLTVFVVVSLIV. Residues 41-69 lie on the Cytoplasmic side of the membrane; the sequence is ERSIYRLSTWLRKTKRKPMFAALEKMKEE. Residues 70 to 90 traverse the membrane as a helical segment; sequence LMLLGFISLLLTATSSTIANI. Residues 91-163 lie on the Extracellular side of the membrane; the sequence is CVPSSFYNDR…SYEGLEQLHR (73 aa). The chain crosses the membrane as a helical span at residues 164 to 184; the sequence is FIFIMAVTHVTYSCLTMLLAI. Residues 185 to 287 are Cytoplasmic-facing; the sequence is VKIHSWRIWE…IRSMEEEFQR (103 aa). Helical transmembrane passes span 288–308 and 309–329; these read IVGV…FNIK and GSNL…LVGA. Residues 330-371 lie on the Cytoplasmic side of the membrane; sequence KLQHVIATLALENAGLTEYPSGVKLRPRDELFWFNKPELLLS. Residues 372–392 traverse the membrane as a helical segment; it reads LIHFILFQNSFELASFFWFWW. The Extracellular portion of the chain corresponds to 393 to 411; that stretch reads QFGYSSCFLKNHYLVYFRL. The helical transmembrane segment at 412 to 432 threads the bilayer; sequence LLGFAGQFLCSYSTLPLYALV. At 433–573 the chain is on the cytoplasmic side; it reads TQMGTNYKAA…SSSLPSEKRV (141 aa). Residues 446–467 are calmodulin-binding; that stretch reads QRIRETIRGWGKATRRKRRHGL. 2 disordered regions span residues 500–532 and 554–573; these read EQQR…TSSR and RSEP…EKRV. A compositionally biased stretch (low complexity) spans 507 to 516; the sequence is EQGTTELELQ. Polar residues predominate over residues 561–573; that stretch reads LSRSSSLPSEKRV.

The protein belongs to the MLO family.

Its subcellular location is the membrane. May be involved in modulation of pathogen defense and leaf cell death. Activity seems to be regulated by Ca(2+)-dependent calmodulin binding and seems not to require heterotrimeric G proteins. This Arabidopsis thaliana (Mouse-ear cress) protein is MLO-like protein 11 (MLO11).